Here is a 323-residue protein sequence, read N- to C-terminus: MNKILFYLFVYGVVNSAAYDLLKAPNYFEEFVHRFNKDYGSEVEKLRRFKIFQHNLNEIINKNQNDSAKYEINKFSDLSKDETIAKYTGLSLPIQTQNFCKVIVLDQPPGKGPLEFDWRRLNKVTSVKNQGMCGACWAFATLASLESQFAIKHNQLINLSEQQMIDCDFVDAGCNGGLLHTAFEAIIKMGGVQLESDYPYEADNNNCRMNSNKFLVQVKDCYRYITVYEEKLKDLLRLVGPIPMAIDAADIVNYKQGIIKYCFNSGLNHAVLLVGYGVENNIPYWTFKNTWGTDWGEDGFFRVQQNINACGMRNELASTAVIY.

Residues 1–16 form the signal peptide; that stretch reads MNKILFYLFVYGVVNS. A propeptide spans 17-112 (activation peptide); sequence AAYDLLKAPN…IVLDQPPGKG (96 aa). Disulfide bonds link Cys-133–Cys-174, Cys-167–Cys-207, and Cys-262–Cys-310. The active site involves Cys-136. N-linked (GlcNAc...) asparagine; by host glycosylation occurs at Asn-158. Catalysis depends on residues His-269 and Asn-289.

It belongs to the peptidase C1 family. As to quaternary structure, interacts with chitinase/CHIA; this interaction maintains VCATH in the host endoplasmic reticulum. Synthesized as an inactive proenzyme and activated by proteolytic removal of the inhibitory propeptide.

It is found in the host endoplasmic reticulum. It catalyses the reaction Endopeptidase of broad specificity, hydrolyzing substrates of both cathepsin L and cathepsin B.. Functionally, cysteine protease that plays an essential role in host liquefaction to facilitate horizontal transmission of the virus. Accumulates within infected cells as an inactive proenzyme (proV-CATH), which is activated by proteolytic cleavage upon cell death. The sequence is that of Viral cathepsin (VCATH) from Lepidoptera (butterflies and moths).